The chain runs to 357 residues: Glutamine synthetase root isozyme A (357 aa).

Positions 19–99 (IIAEYIWVGG…VICDVYTPAG (81 aa)) constitute a GS beta-grasp domain. The GS catalytic domain maps to 106 to 357 (KRYNAAKIFS…AETTILWKKP (252 aa)).

It belongs to the glutamine synthetase family. In terms of assembly, homooctamer.

Its subcellular location is the cytoplasm. The enzyme catalyses L-glutamate + NH4(+) + ATP = L-glutamine + ADP + phosphate + H(+). The protein is Glutamine synthetase root isozyme A (GS3A) of Pisum sativum (Garden pea).